A 378-amino-acid polypeptide reads, in one-letter code: Myoglobin (378 aa).

His332 contributes to the heme binding site.

Belongs to the indoleamine 2,3-dioxygenase family. As to quaternary structure, homodimer. Heme serves as cofactor.

Serves a reserve supply of oxygen and facilitates the movement of oxygen within muscles. The chain is Myoglobin from Haliotis madaka (Giant abalone).